The primary structure comprises 1355 residues: MTIQQFYRKPAISEYEIKLLKNNLKKQHNIDIESIETEYCFNVQYPDNHKLNESEQSTLVWLLSETFEPKNFSIDKSFLKTTTTTTENEIIIEVGPRMNFTTTYSSNATSICKSCNLSIIDRIERSRRYLVKSVSKLSEKQIDQFLELIHDRMTECLYPTPIKSFDTGIIPKAVVYIPVVEEGRAALERVNKEMGLAFDEQDLALYTDLFQNQLKRNPSDVECFDIGQSNSEHSRHWFFNGKLIVDGNMSDKTLFQIVKNTLKANPQNSLIAFSDNSSSIKGFKTKVLIPKSQIEASEYLEGEREQPIIFTAETHNFPTGIAPFEGAETGTGGRLRDTHATGRGSLVVAGTVGYCVGNLNIPGYELPWENKEYNYPDNMANPLKIEIEASNGASDYGNKFGEPVIIGFTRSYGNTLPNGERREWIKPIMFSGGIGFMDERHLKKEQPEIGMVVVKAGGPAYRIGMGGGSASSMVGGDNKHELDFSAVQRGDAEMGQKLNRIVRSCVESEIHGGCNPIVSVHDQGAGGAGNVLKEIVDPLGAKIYLDRIISGDPTLSAMEIWGAEYQENDALLIKAEHKDYLKKVSERERLPIAFVGDVTGDGIAQLITKDGETPVNLPLDKVLQKMPPKTFVLDHVEKQLKPFTLPKELLVGDHQTCFNECLNRVLRLLSVGSKRFLINKVDRAVTGLVARQQCVGPLHTPVSNVAVISSGYFGKSGAATSIGEQPIKGFISAKSMAYLTVGEALTNLMWASITDLGDVKCSGNWMWAAKLKGEGVELYDAAIEMHDVMVELGIAIDGGKDSLSMAAKAPKSDGSQELVKAPGALVVSTYVPCDDITLTVTPDLKLSSKDDSVILYLDLGCANNFIGGSALTQVFNQVGNDEPHHNTPLLKNTFMAIQKLVKQQLISAGHDRSDGGLITTLIEMSLSGNRGLEINLPDTHNSDQSPLSIIKLLFSEELGAVLEIKKSNQQIVLDILKQFNVPTQVIGNTSCNNNNNNNNNGSDEDLFIVKVGDKLIYNIKLSQLSKQWEETSYQLELLQANPTFVESEMKNLLKRATGKGKGPNYNMTYKISPISKELALLANKAPKVAVIREEGSNGDREMAAAFHFAGFQAFDVTMSDLLNGNIQLDERFKGVAFVGGFSYGDVMDSAKGWAGSIRFNQQVSKQFDHFYGRNDTFSLGLCNGCQLMALLGWVPYRGIEQTHQPRFIHNASGRFESRWVNVKIMPSPALLLKGMEGSVLGVWSQHGEGRFWSEDQSIVNDIKANNLSPIRYVDDDGEITESYPFNPSGTQEGFASLCSKDGRHLAIMPHPERSFLSWQWPFMPENIKQNVGGLDQPSPWIKIFQNAKSFCDSLN.

ATP is bound by residues 326-337 and 406-408; these read GAETGTGGRLRD and IGF. 3 residues coordinate Mg(2+): Glu-743, Asn-747, and Asp-911. Ser-913 contributes to the ATP binding site. Positions 1087 to 1325 constitute a Glutamine amidotransferase type-1 domain; it reads KVAVIREEGS…LSWQWPFMPE (239 aa). The active-site Nucleophile is Cys-1182. Active-site residues include His-1310 and Glu-1312.

It in the N-terminal section; belongs to the FGAMS family.

The protein localises to the cytoplasm. The catalysed reaction is N(2)-formyl-N(1)-(5-phospho-beta-D-ribosyl)glycinamide + L-glutamine + ATP + H2O = 2-formamido-N(1)-(5-O-phospho-beta-D-ribosyl)acetamidine + L-glutamate + ADP + phosphate + H(+). It functions in the pathway purine metabolism; IMP biosynthesis via de novo pathway; 5-amino-1-(5-phospho-D-ribosyl)imidazole from N(2)-formyl-N(1)-(5-phospho-D-ribosyl)glycinamide: step 1/2. Phosphoribosylformylglycinamidine synthase involved in the purines biosynthetic pathway. Catalyzes the ATP-dependent conversion of formylglycinamide ribonucleotide (FGAR) and glutamine to yield formylglycinamidine ribonucleotide (FGAM) and glutamate. This Dictyostelium discoideum (Social amoeba) protein is Phosphoribosylformylglycinamidine synthase (purL).